Reading from the N-terminus, the 556-residue chain is 2-isopropylmalate synthase (556 aa).

The Pyruvate carboxyltransferase domain maps to 33–307; sequence PIWCSSDLRD…HPQLDFSDID (275 aa). Mg(2+)-binding residues include aspartate 42, histidine 246, histidine 248, and asparagine 282. Positions 439 to 556 are regulatory domain; it reads ATSPYALASH…AVTQAEAKAA (118 aa).

It belongs to the alpha-IPM synthase/homocitrate synthase family. LeuA type 2 subfamily. In terms of assembly, homodimer. Mg(2+) is required as a cofactor.

The protein localises to the cytoplasm. The enzyme catalyses 3-methyl-2-oxobutanoate + acetyl-CoA + H2O = (2S)-2-isopropylmalate + CoA + H(+). The protein operates within amino-acid biosynthesis; L-leucine biosynthesis; L-leucine from 3-methyl-2-oxobutanoate: step 1/4. Catalyzes the condensation of the acetyl group of acetyl-CoA with 3-methyl-2-oxobutanoate (2-ketoisovalerate) to form 3-carboxy-3-hydroxy-4-methylpentanoate (2-isopropylmalate). In Pseudomonas paraeruginosa (strain DSM 24068 / PA7) (Pseudomonas aeruginosa (strain PA7)), this protein is 2-isopropylmalate synthase.